The following is a 110-amino-acid chain: Large ribosomal subunit protein uL22 (110 aa).

The protein belongs to the universal ribosomal protein uL22 family. In terms of assembly, part of the 50S ribosomal subunit.

In terms of biological role, this protein binds specifically to 23S rRNA; its binding is stimulated by other ribosomal proteins, e.g. L4, L17, and L20. It is important during the early stages of 50S assembly. It makes multiple contacts with different domains of the 23S rRNA in the assembled 50S subunit and ribosome. The globular domain of the protein is located near the polypeptide exit tunnel on the outside of the subunit, while an extended beta-hairpin is found that lines the wall of the exit tunnel in the center of the 70S ribosome. The protein is Large ribosomal subunit protein uL22 of Syntrophotalea carbinolica (strain DSM 2380 / NBRC 103641 / GraBd1) (Pelobacter carbinolicus).